Here is a 316-residue protein sequence, read N- to C-terminus: DDRGK domain-containing protein 1 (316 aa).

At 1-3 the chain is on the lumenal side; that stretch reads MVE. The helical transmembrane segment at 4–24 threads the bilayer; that stretch reads LDYLFLGSVGFLTIALMLIIL. Residues 25–316 lie on the Cytoplasmic side of the membrane; the sequence is RIIKLYFDEK…VEHVSELTAA (292 aa). The segment at 147–187 is disordered; sequence LEQEKEKRLQKEREKQMEQEEEERKRKCREREEREKREEEE.

It belongs to the DDRGK1 family.

It localises to the endoplasmic reticulum membrane. In terms of biological role, substrate adapter for ufmylation, the covalent attachment of the ubiquitin-like modifier UFM1 to substrate proteins. The sequence is that of DDRGK domain-containing protein 1 from Brugia malayi (Filarial nematode worm).